Here is a 319-residue protein sequence, read N- to C-terminus: Acetyl esterase (319 aa).

The short motif at 91–93 (HGG) is the Involved in the stabilization of the negatively charged intermediate by the formation of the oxyanion hole element. Active-site residues include S165, D262, and H292.

It belongs to the 'GDXG' lipolytic enzyme family. In terms of assembly, homodimer. Interacts with MalT and MelA.

The protein resides in the cytoplasm. In terms of biological role, displays esterase activity towards short chain fatty esters (acyl chain length of up to 8 carbons). Able to hydrolyze triacetylglycerol (triacetin) and tributyrylglycerol (tributyrin), but not trioleylglycerol (triolein) or cholesterol oleate. Negatively regulates MalT activity by antagonizing maltotriose binding. Inhibits MelA galactosidase activity. The polypeptide is Acetyl esterase (Escherichia coli O157:H7).